Here is a 349-residue protein sequence, read N- to C-terminus: tRNA N6-adenosine threonylcarbamoyltransferase (349 aa).

Fe cation contacts are provided by H117, H121, and Y138. Substrate is bound by residues 138 to 142, D170, D191, and N271; that span reads YVAGG. D299 serves as a coordination point for Fe cation.

The protein belongs to the KAE1 / TsaD family. Fe(2+) serves as cofactor.

The protein resides in the cytoplasm. The catalysed reaction is L-threonylcarbamoyladenylate + adenosine(37) in tRNA = N(6)-L-threonylcarbamoyladenosine(37) in tRNA + AMP + H(+). In terms of biological role, required for the formation of a threonylcarbamoyl group on adenosine at position 37 (t(6)A37) in tRNAs that read codons beginning with adenine. Is probably involved in the transfer of the threonylcarbamoyl moiety of threonylcarbamoyl-AMP (TC-AMP) to the N6 group of A37. The polypeptide is tRNA N6-adenosine threonylcarbamoyltransferase (Aeropyrum pernix (strain ATCC 700893 / DSM 11879 / JCM 9820 / NBRC 100138 / K1)).